Here is a 719-residue protein sequence, read N- to C-terminus: Potassium-transporting ATPase ATP-binding subunit (719 aa).

The next 4 helical transmembrane spans lie at 35-55 (LFVV…PGLF), 62-82 (VYYA…NYAE), 228-248 (ILLS…FFFG), and 254-274 (FVGG…VALM). The 4-aspartylphosphate intermediate role is filled by D318. Residues D355 and E359 each contribute to the ATP site. Residues 372-396 (GKVQTDGGQSASEELDEPGDSVDAP) form a disordered region. The segment covering 373-383 (KVQTDGGQSAS) has biased composition (polar residues). Residues 416–423 (FSAETRMS) and K435 each bind ATP. Mg(2+)-binding residues include D554 and D558. 3 consecutive transmembrane segments (helical) span residues 624–644 (FVLL…MDIL), 652–672 (AVTA…PLAL), and 698–718 (LIAP…LGVF).

Belongs to the cation transport ATPase (P-type) (TC 3.A.3) family. Type IA subfamily. In terms of assembly, the system is composed of three essential subunits: KdpA, KdpB and KdpC. The complex also contains KdpF, a small non-essential subunit.

The protein localises to the cell membrane. The enzyme catalyses K(+)(out) + ATP + H2O = K(+)(in) + ADP + phosphate + H(+). Its function is as follows. Part of the high-affinity ATP-driven potassium transport (or Kdp) system, which catalyzes the hydrolysis of ATP coupled with the electrogenic transport of potassium into the cytoplasm. This subunit is responsible for energy coupling to the transport system and for the release of the potassium ions to the cytoplasm. The Kdp system is essential for growth under K(+) limitation, and for survival under desiccation and salt crystal inclusion. The sequence is that of Potassium-transporting ATPase ATP-binding subunit from Halobacterium salinarum (strain ATCC 29341 / DSM 671 / R1).